The following is a 331-amino-acid chain: Phosphate acyltransferase (331 aa).

The protein belongs to the PlsX family. In terms of assembly, homodimer. Probably interacts with PlsY.

The protein localises to the cytoplasm. The catalysed reaction is a fatty acyl-[ACP] + phosphate = an acyl phosphate + holo-[ACP]. Its pathway is lipid metabolism; phospholipid metabolism. In terms of biological role, catalyzes the reversible formation of acyl-phosphate (acyl-PO(4)) from acyl-[acyl-carrier-protein] (acyl-ACP). This enzyme utilizes acyl-ACP as fatty acyl donor, but not acyl-CoA. This Ureaplasma parvum serovar 3 (strain ATCC 27815 / 27 / NCTC 11736) protein is Phosphate acyltransferase.